Reading from the N-terminus, the 171-residue chain is Small ribosomal subunit protein uS5 (171 aa).

Residues leucine 16 to valine 79 form the S5 DRBM domain.

Belongs to the universal ribosomal protein uS5 family. Part of the 30S ribosomal subunit. Contacts proteins S4 and S8.

In terms of biological role, with S4 and S12 plays an important role in translational accuracy. Located at the back of the 30S subunit body where it stabilizes the conformation of the head with respect to the body. The sequence is that of Small ribosomal subunit protein uS5 from Desulfotalea psychrophila (strain LSv54 / DSM 12343).